Consider the following 250-residue polypeptide: MKSRYLLFFLPLIVAKYTSAATMQPFHSPEESVNSQFYLPPPPGNDDPAFRYDKEAYFKGYAIKGSPRWKQAAEDADISVENIARIFSPVVGAKINPKDTPETWNMLQNLLKMGGYYATASAKKYYMRTRPFVLFNHSTCRPEDENTLRKDGSYPSGHTAYSTLLALVLSQARPERAQELARRGWEFGQSRVICGAHWQSDVDAGRYVGAVEFARLQTIPAFQKSLAKVREELNDKNNLLSKEERPELNY.

The N-terminal stretch at 1–20 (MKSRYLLFFLPLIVAKYTSA) is a signal peptide.

Belongs to the class A bacterial acid phosphatase family. Homodimer.

The protein resides in the periplasm. The catalysed reaction is a phosphate monoester + H2O = an alcohol + phosphate. The protein is Non-specific acid phosphatase (phoN) of Salmonella typhi.